Here is a 383-residue protein sequence, read N- to C-terminus: Chaperone protein DnaJ (383 aa).

The J domain maps to 6-70; that stretch reads DYYDVLGVGR…QKRAAYDQYG (65 aa). Residues 140-222 form a CR-type zinc finger; sequence GKETKISYSR…CHGTGREEER (83 aa). Zn(2+) contacts are provided by Cys-153, Cys-156, Cys-170, Cys-173, Cys-196, Cys-199, Cys-210, and Cys-213. CXXCXGXG motif repeat units lie at residues 153–160, 170–177, 196–203, and 210–217; these read CHTCHGSG, CHKCHGAG, CDVCGGTG, and CDTCHGTG.

This sequence belongs to the DnaJ family. As to quaternary structure, homodimer. Requires Zn(2+) as cofactor.

It localises to the cytoplasm. In terms of biological role, participates actively in the response to hyperosmotic and heat shock by preventing the aggregation of stress-denatured proteins and by disaggregating proteins, also in an autonomous, DnaK-independent fashion. Unfolded proteins bind initially to DnaJ; upon interaction with the DnaJ-bound protein, DnaK hydrolyzes its bound ATP, resulting in the formation of a stable complex. GrpE releases ADP from DnaK; ATP binding to DnaK triggers the release of the substrate protein, thus completing the reaction cycle. Several rounds of ATP-dependent interactions between DnaJ, DnaK and GrpE are required for fully efficient folding. Also involved, together with DnaK and GrpE, in the DNA replication of plasmids through activation of initiation proteins. The sequence is that of Chaperone protein DnaJ from Latilactobacillus sakei subsp. sakei (strain 23K) (Lactobacillus sakei subsp. sakei).